Here is a 161-residue protein sequence, read N- to C-terminus: Ribonuclease H (161 aa).

The region spanning 3 to 144 (VLKQLSIFTD…CDTLARVAAE (142 aa)) is the RNase H type-1 domain. Mg(2+)-binding residues include D12, E50, D72, and D136.

The protein belongs to the RNase H family. In terms of assembly, monomer. Mg(2+) is required as a cofactor.

It localises to the cytoplasm. The enzyme catalyses Endonucleolytic cleavage to 5'-phosphomonoester.. In terms of biological role, endonuclease that specifically degrades the RNA of RNA-DNA hybrids. The protein is Ribonuclease H of Shewanella woodyi (strain ATCC 51908 / MS32).